A 455-amino-acid chain; its full sequence is Ribulose bisphosphate carboxylase large chain (455 aa).

At K5 the chain carries N6,N6,N6-trimethyllysine. Substrate-binding residues include N114 and T164. K166 acts as the Proton acceptor in catalysis. K168 contacts substrate. Residues K192, D194, and E195 each coordinate Mg(2+). The residue at position 192 (K192) is an N6-carboxylysine. Catalysis depends on H285, which acts as the Proton acceptor. The substrate site is built by R286, H318, and S370.

This sequence belongs to the RuBisCO large chain family. Type I subfamily. As to quaternary structure, heterohexadecamer of 8 large chains and 8 small chains; disulfide-linked. The disulfide link is formed within the large subunit homodimers. Mg(2+) is required as a cofactor. The disulfide bond which can form in the large chain dimeric partners within the hexadecamer appears to be associated with oxidative stress and protein turnover.

It localises to the plastid. The protein resides in the chloroplast. It carries out the reaction 2 (2R)-3-phosphoglycerate + 2 H(+) = D-ribulose 1,5-bisphosphate + CO2 + H2O. It catalyses the reaction D-ribulose 1,5-bisphosphate + O2 = 2-phosphoglycolate + (2R)-3-phosphoglycerate + 2 H(+). Its function is as follows. RuBisCO catalyzes two reactions: the carboxylation of D-ribulose 1,5-bisphosphate, the primary event in carbon dioxide fixation, as well as the oxidative fragmentation of the pentose substrate in the photorespiration process. Both reactions occur simultaneously and in competition at the same active site. The chain is Ribulose bisphosphate carboxylase large chain from Lupinus cosentinii (West Australian blue lupine).